We begin with the raw amino-acid sequence, 141 residues long: Ly6/PLAUR domain-containing protein 1 (141 aa).

The signal sequence occupies residues 1–20; the sequence is MWVLGIAATFCGLFWLPGLA. Disulfide bonds link Cys25-Cys54, Cys28-Cys37, Cys46-Cys71, Cys77-Cys100, Cys88-Cys97, and Cys101-Cys106. A UPAR/Ly6 domain is found at 25–108; that stretch reads CYQCEEFQLN…SCCNTPLCNG (84 aa). The N-linked (GlcNAc...) asparagine glycan is linked to Asn45. Gly115 carries the GPI-anchor amidated glycine lipid modification. A propeptide spans 116–141 (removed in mature form); that stretch reads SSASAIRPELFTTVLFFNLALCLAHC.

In terms of assembly, interacts with CHRNA4 and nAChRs containing alpha-4:beta-2 (CHRNA4:CHRNB2) and alpha-7 (CHRNA7) subunits.

The protein resides in the cell membrane. Functionally, believed to act as a modulator of nicotinic acetylcholine receptors (nAChRs) activity. In vitro increases receptor desensitization and decreases affinity for ACh of alpha-4:beta-2-containing nAChRs. May play a role in the intracellular trafficking of alpha-4:beta-2 and alpha-7-containing nAChRs and may inhibit their expression at the cell surface. May be involved in the control of anxiety. This chain is Ly6/PLAUR domain-containing protein 1 (Lypd1), found in Rattus norvegicus (Rat).